The sequence spans 428 residues: Homocitrate synthase, cytosolic isozyme (428 aa).

One can recognise a Pyruvate carboxyltransferase domain in the interval 23 to 276 (FQLIDSTLRE…KSKYKLHKIR (254 aa)). Arginine 31 serves as a coordination point for 2-oxoglutarate. Glutamate 32 is a Mg(2+) binding site. Residues histidine 91, arginine 151, and threonine 185 each contribute to the 2-oxoglutarate site. The Mg(2+) site is built by histidine 212 and histidine 214. Residue histidine 309 is the Proton acceptor of the active site. Serine 385 carries the phosphoserine modification. Position 396 is a phosphothreonine (threonine 396). The tract at residues 399–428 (VLSAKKNKKNDSDVPELATIPAAKRTKPSA) is disordered. Phosphoserine is present on residues serine 401 and serine 410.

Belongs to the alpha-IPM synthase/homocitrate synthase family. Homocitrate synthase LYS20/LYS21 subfamily. The cofactor is Mg(2+). Mn(2+) is required as a cofactor.

The protein localises to the cytoplasm. The enzyme catalyses acetyl-CoA + 2-oxoglutarate + H2O = (2R)-homocitrate + CoA + H(+). The protein operates within amino-acid biosynthesis; L-lysine biosynthesis via AAA pathway; L-alpha-aminoadipate from 2-oxoglutarate: step 1/5. Functionally, catalyzes the aldol-type condensation of 2-oxoglutarate with acetyl-CoA to yield homocitrate. Carries out the first step of the alpha-aminoadipate (AAA) lysine biosynthesis pathway. The polypeptide is Homocitrate synthase, cytosolic isozyme (LYS20) (Saccharomyces cerevisiae (strain ATCC 204508 / S288c) (Baker's yeast)).